The sequence spans 356 residues: Histidinol-phosphate aminotransferase (356 aa).

At Lys214 the chain carries N6-(pyridoxal phosphate)lysine.

The protein belongs to the class-II pyridoxal-phosphate-dependent aminotransferase family. Histidinol-phosphate aminotransferase subfamily. As to quaternary structure, homodimer. It depends on pyridoxal 5'-phosphate as a cofactor.

It carries out the reaction L-histidinol phosphate + 2-oxoglutarate = 3-(imidazol-4-yl)-2-oxopropyl phosphate + L-glutamate. It functions in the pathway amino-acid biosynthesis; L-histidine biosynthesis; L-histidine from 5-phospho-alpha-D-ribose 1-diphosphate: step 7/9. This Shigella dysenteriae serotype 1 (strain Sd197) protein is Histidinol-phosphate aminotransferase.